The primary structure comprises 249 residues: MFKFRKKSHQEVLDNIPNHIGIIMDGNGRWAKKRLQPRVMGHKAGMDALQKVTIEASQLGVKVLTVYAFSTENWSRPQDEVKFIMNLPVEFFNKYVPELDKNNVRILTIGDNSRLPKETLDALEKAVEQTKHNSGLILNFALNYGGRAEIVSAVQAIAKEVEIGRLRPEAIDEDLIAKHLMTDKLPYLYRDPDLIIRTSGELRLSNFLPWQSAYSEFYFTDVFWPDFDQQGLHQAISDYNKRHRRFGGV.

Residue D25 is part of the active site. D25 contacts Mg(2+). Residues 26-29, W30, R38, H42, and 70-72 each bind substrate; these read GNGR and STE. N73 (proton acceptor) is an active-site residue. Residues W74, R76, R197, and 203-205 each bind substrate; that span reads RLS. E216 contacts Mg(2+).

This sequence belongs to the UPP synthase family. Homodimer. Mg(2+) is required as a cofactor.

Catalyzes the condensation of isopentenyl diphosphate (IPP) with allylic pyrophosphates generating different type of terpenoids. The sequence is that of Isoprenyl transferase from Streptococcus thermophilus (strain CNRZ 1066).